The chain runs to 334 residues: Uracil-DNA glycosylase (334 aa).

Residues 1–17 (MKRACSRSPSPRRRPSS) show a composition bias toward basic residues. Disordered stretches follow at residues 1–63 (MKRA…CRSS) and 79–104 (VTFS…AATS). Residues 40–50 (GASNDASTETR) are compositionally biased toward polar residues. Asp178 (proton acceptor) is an active-site residue.

The protein belongs to the uracil-DNA glycosylase (UDG) superfamily. UNG family.

The protein localises to the host nucleus. The enzyme catalyses Hydrolyzes single-stranded DNA or mismatched double-stranded DNA and polynucleotides, releasing free uracil.. Its function is as follows. Excises uracil residues from the DNA which can arise as a result of misincorporation of dUMP residues by DNA polymerase or deamination of cytosines. Therefore may reduce deleterious uracil incorporation into the viral genome, particularly in terminally differentiated cells which lack DNA repair enzymes. This Human herpesvirus 1 (strain 17) (HHV-1) protein is Uracil-DNA glycosylase.